The primary structure comprises 124 residues: MGDRNLTPKQFGALGEQYAAAWLEEHGWTTLSRNWHTRYGELDIVMLNPEYTVVFVEVKSRRSMHYGYPQEAITPAKQHNLRKAACDWLLDRRNRVPHTAVRFDVVTIVLRVGRPLVHHIENAF.

It belongs to the UPF0102 family.

The polypeptide is UPF0102 protein Blon_1698/BLIJ_1758 (Bifidobacterium longum subsp. infantis (strain ATCC 15697 / DSM 20088 / JCM 1222 / NCTC 11817 / S12)).